Here is a 340-residue protein sequence, read N- to C-terminus: Glycerol-3-phosphate dehydrogenase [NAD(P)+] (340 aa).

NADPH is bound by residues Ser-13, Trp-14, and Lys-108. Sn-glycerol 3-phosphate-binding residues include Lys-108, Gly-139, and Ser-141. An NADPH-binding site is contributed by Ala-143. Sn-glycerol 3-phosphate-binding residues include Lys-194, Asp-247, Ser-257, Arg-258, and Asn-259. Catalysis depends on Lys-194, which acts as the Proton acceptor. Arg-258 is an NADPH binding site. Residues Val-282 and Glu-284 each contribute to the NADPH site.

It belongs to the NAD-dependent glycerol-3-phosphate dehydrogenase family.

The protein localises to the cytoplasm. The catalysed reaction is sn-glycerol 3-phosphate + NAD(+) = dihydroxyacetone phosphate + NADH + H(+). It catalyses the reaction sn-glycerol 3-phosphate + NADP(+) = dihydroxyacetone phosphate + NADPH + H(+). It functions in the pathway membrane lipid metabolism; glycerophospholipid metabolism. In terms of biological role, catalyzes the reduction of the glycolytic intermediate dihydroxyacetone phosphate (DHAP) to sn-glycerol 3-phosphate (G3P), the key precursor for phospholipid synthesis. This Streptococcus thermophilus (strain ATCC BAA-491 / LMD-9) protein is Glycerol-3-phosphate dehydrogenase [NAD(P)+].